A 183-amino-acid polypeptide reads, in one-letter code: Small ribosomal subunit protein uS4 (183 aa).

An S4 RNA-binding domain is found at 106 to 168 (RRLQTQVYRQ…AGSPLAREGH (63 aa)).

It belongs to the universal ribosomal protein uS4 family. In terms of assembly, part of the 30S ribosomal subunit. Contacts protein S5. The interaction surface between S4 and S5 is involved in control of translational fidelity.

One of the primary rRNA binding proteins, it binds directly to 16S rRNA where it nucleates assembly of the body of the 30S subunit. Functionally, with S5 and S12 plays an important role in translational accuracy. This is Small ribosomal subunit protein uS4 from Methanothrix thermoacetophila (strain DSM 6194 / JCM 14653 / NBRC 101360 / PT) (Methanosaeta thermophila).